The sequence spans 220 residues: Coat protein (220 aa).

Belongs to the potexvirus capsid protein family.

Its subcellular location is the virion. Functionally, required for genome encapsidation. Forms ribonucleoprotein complexes along with TGB1 helicase and viral RNA. The chain is Coat protein from Cattleya (Nun's hood orchid).